A 456-amino-acid chain; its full sequence is Adenylosuccinate synthetase (456 aa).

Residues 11 to 17 (GDEGKGG) and 39 to 41 (GHT) contribute to the GTP site. Catalysis depends on aspartate 12, which acts as the Proton acceptor. Mg(2+) is bound by residues aspartate 12 and glycine 39. IMP contacts are provided by residues 12-15 (DEGK), 37-40 (NAGH), threonine 127, arginine 141, glutamine 232, threonine 247, and arginine 328. Histidine 40 acts as the Proton donor in catalysis. 324 to 330 (TVTGRPR) provides a ligand contact to substrate. Residues arginine 330, 356–358 (HLD), and 441–443 (GVG) each bind GTP.

It belongs to the adenylosuccinate synthetase family. Homodimer. Mg(2+) is required as a cofactor.

It localises to the cytoplasm. The enzyme catalyses IMP + L-aspartate + GTP = N(6)-(1,2-dicarboxyethyl)-AMP + GDP + phosphate + 2 H(+). It functions in the pathway purine metabolism; AMP biosynthesis via de novo pathway; AMP from IMP: step 1/2. Functionally, plays an important role in the de novo pathway of purine nucleotide biosynthesis. Catalyzes the first committed step in the biosynthesis of AMP from IMP. This is Adenylosuccinate synthetase from Natronomonas pharaonis (strain ATCC 35678 / DSM 2160 / CIP 103997 / JCM 8858 / NBRC 14720 / NCIMB 2260 / Gabara) (Halobacterium pharaonis).